Reading from the N-terminus, the 216-residue chain is uncharacterized protein (216 aa).

Positions 55 to 216 (NEDKAEAMSN…NEKEKDVNPK (162 aa)) are disordered. Composition is skewed to basic and acidic residues over residues 134-152 (LTEK…DNHV), 177-187 (KINDKSDDTLH), and 207-216 (NEKEKDVNPK).

This is an uncharacterized protein from Caenorhabditis elegans.